Reading from the N-terminus, the 189-residue chain is Glutathione-dependent formaldehyde-activating enzyme (189 aa).

The region spanning 20–167 is the CENP-V/GFA domain; the sequence is FAGGTLVCKC…LKELGLEPYD (148 aa). Residues cysteine 27, cysteine 29, cysteine 48, cysteine 50, cysteine 53, cysteine 95, and cysteine 98 each contribute to the Zn(2+) site.

The protein belongs to the Gfa family. Requires Zn(2+) as cofactor.

It carries out the reaction S-(hydroxymethyl)glutathione = glutathione + formaldehyde. It participates in one-carbon metabolism; formaldehyde degradation; formate from formaldehyde (glutathione route): step 1/3. In terms of biological role, catalyzes the condensation of formaldehyde and glutathione to S-hydroxymethylglutathione. The protein is Glutathione-dependent formaldehyde-activating enzyme of Rhodopseudomonas palustris (strain BisB18).